The primary structure comprises 192 residues: NADH:FMN oxidoreductase (192 aa).

The disordered stretch occupies residues 1-20; the sequence is MSDKPNAVSSHTTPDVPEVA. Residues 60–63, 77–84, A111, and R117 each bind FMN; these read TATS and NIAETSSS.

Belongs to the non-flavoprotein flavin reductase family.

The protein resides in the cytoplasm. The enzyme catalyses FMNH2 + NAD(+) = FMN + NADH + 2 H(+). It participates in sulfur metabolism; dibenzothiophene degradation. Its function is as follows. An NADH:FMN oxidoreductase which supplies reduced FMN for the '4S' desulfurization pathway that removes covalently bound sulfur from dibenzothiophene (DBT) without breaking carbon-carbon bonds. Provides DszA and DszC (DBTO2-monooxygenase and DBT-monooxygenase respectively) with reduced flavin (FMN). The chain is NADH:FMN oxidoreductase from Rhodococcus erythropolis (Arthrobacter picolinophilus).